We begin with the raw amino-acid sequence, 235 residues long: STARD3 N-terminal-like protein (235 aa).

Position 1 is an N-acetylmethionine (methionine 1). The segment at 1 to 20 (MNHLPEHMENTLTGSQSSHA) is disordered. Residues 1–53 (MNHLPEHMENTLTGSQSSHASLRDIHSINPAQLMARIESYEGREKKGISDVRR) are Cytoplasmic-facing. Residues 10 to 20 (NTLTGSQSSHA) are compositionally biased toward polar residues. 3 positions are modified to phosphoserine: serine 15, serine 21, and serine 27. An MENTAL domain is found at 48-218 (ISDVRRTFCL…YSPPESEAGS (171 aa)). A helical transmembrane segment spans residues 54-74 (TFCLFVTFDLLFVTLLWIIEL). At 75–97 (NVNGGIENTLKKEVIHYDYYSSY) the chain is on the extracellular side. A helical membrane pass occupies residues 98 to 118 (FDIFLLAVFRFKVLILGYAVC). Over 119 to 122 (RLRH) the chain is Cytoplasmic. A helical transmembrane segment spans residues 123–143 (WWAIALTTAVTSAFLLAKVIL). The Extracellular segment spans residues 144-150 (SKLFSQG). Residues 151–171 (AFGYVLPIISFILAWIETWFL) form a helical membrane-spanning segment. At 172–235 (DFKVLPQEAE…QESEKPLLEL (64 aa)) the chain is on the cytoplasmic side. Serine 193 is modified (phosphoserine). Positions 202 to 235 (GLSDGQFYSPPESEAGSEEEAEEKQESEKPLLEL) are disordered. An FFAT motif is present at residues 208-213 (FYSPPE). Positions 225-235 (KQESEKPLLEL) are enriched in basic and acidic residues.

Belongs to the STARD3 family. As to quaternary structure, homodimer. Interacts (via the MENTAL domain) with STARD3NL. Interacts (via FFAT motif) with VAPA. Interacts (via FFAT motif) with VAPB. Interacts (via FFAT motif) with MOSPD2 (via MSP domain).

It localises to the late endosome membrane. In terms of biological role, tethering protein that creates contact site between the endoplasmic reticulum and late endosomes: localizes to late endosome membranes and contacts the endoplasmic reticulum via interaction with VAPA and VAPB. This chain is STARD3 N-terminal-like protein, found in Mus musculus (Mouse).